The chain runs to 288 residues: 4-hydroxy-3-methylbut-2-enyl diphosphate reductase (288 aa).

Cysteine 13 is a [4Fe-4S] cluster binding site. (2E)-4-hydroxy-3-methylbut-2-enyl diphosphate-binding residues include histidine 41 and histidine 75. Dimethylallyl diphosphate contacts are provided by histidine 41 and histidine 75. Positions 41 and 75 each coordinate isopentenyl diphosphate. A [4Fe-4S] cluster-binding site is contributed by cysteine 97. Residue histidine 130 participates in (2E)-4-hydroxy-3-methylbut-2-enyl diphosphate binding. Position 130 (histidine 130) interacts with dimethylallyl diphosphate. Histidine 130 serves as a coordination point for isopentenyl diphosphate. Glutamate 132 serves as the catalytic Proton donor. Threonine 168 serves as a coordination point for (2E)-4-hydroxy-3-methylbut-2-enyl diphosphate. Cysteine 199 contributes to the [4Fe-4S] cluster binding site. Serine 227, serine 228, asparagine 229, and serine 271 together coordinate (2E)-4-hydroxy-3-methylbut-2-enyl diphosphate. Dimethylallyl diphosphate is bound by residues serine 227, serine 228, asparagine 229, and serine 271. Serine 227, serine 228, asparagine 229, and serine 271 together coordinate isopentenyl diphosphate.

The protein belongs to the IspH family. [4Fe-4S] cluster is required as a cofactor.

The enzyme catalyses isopentenyl diphosphate + 2 oxidized [2Fe-2S]-[ferredoxin] + H2O = (2E)-4-hydroxy-3-methylbut-2-enyl diphosphate + 2 reduced [2Fe-2S]-[ferredoxin] + 2 H(+). The catalysed reaction is dimethylallyl diphosphate + 2 oxidized [2Fe-2S]-[ferredoxin] + H2O = (2E)-4-hydroxy-3-methylbut-2-enyl diphosphate + 2 reduced [2Fe-2S]-[ferredoxin] + 2 H(+). Its pathway is isoprenoid biosynthesis; dimethylallyl diphosphate biosynthesis; dimethylallyl diphosphate from (2E)-4-hydroxy-3-methylbutenyl diphosphate: step 1/1. The protein operates within isoprenoid biosynthesis; isopentenyl diphosphate biosynthesis via DXP pathway; isopentenyl diphosphate from 1-deoxy-D-xylulose 5-phosphate: step 6/6. Functionally, catalyzes the conversion of 1-hydroxy-2-methyl-2-(E)-butenyl 4-diphosphate (HMBPP) into a mixture of isopentenyl diphosphate (IPP) and dimethylallyl diphosphate (DMAPP). Acts in the terminal step of the DOXP/MEP pathway for isoprenoid precursor biosynthesis. In Phocaeicola vulgatus (strain ATCC 8482 / DSM 1447 / JCM 5826 / CCUG 4940 / NBRC 14291 / NCTC 11154) (Bacteroides vulgatus), this protein is 4-hydroxy-3-methylbut-2-enyl diphosphate reductase.